The sequence spans 311 residues: tRNA-cytidine(32) 2-sulfurtransferase (311 aa).

The PP-loop motif signature appears at 47-52 (SGGKDS). [4Fe-4S] cluster is bound by residues Cys-122, Cys-125, and Cys-213.

It belongs to the TtcA family. In terms of assembly, homodimer. Mg(2+) is required as a cofactor. The cofactor is [4Fe-4S] cluster.

It is found in the cytoplasm. The catalysed reaction is cytidine(32) in tRNA + S-sulfanyl-L-cysteinyl-[cysteine desulfurase] + AH2 + ATP = 2-thiocytidine(32) in tRNA + L-cysteinyl-[cysteine desulfurase] + A + AMP + diphosphate + H(+). The protein operates within tRNA modification. Catalyzes the ATP-dependent 2-thiolation of cytidine in position 32 of tRNA, to form 2-thiocytidine (s(2)C32). The sulfur atoms are provided by the cysteine/cysteine desulfurase (IscS) system. This chain is tRNA-cytidine(32) 2-sulfurtransferase, found in Escherichia coli O127:H6 (strain E2348/69 / EPEC).